Consider the following 563-residue polypeptide: L-lactate permease (563 aa).

14 helical membrane-spanning segments follow: residues 14–34 (LLLS…ALAI), 37–57 (MKGY…AVLV), 73–93 (AVYG…LYKI), 131–151 (GAAG…GLGF), 157–177 (AGIC…GIPI), 194–214 (MVGR…IIIM), 220–240 (ALEI…VQYL), 249–269 (LPDV…LKWW), 304–324 (IFKA…WGIP), 381–401 (LGSA…ITAI), 419–439 (LPIL…SSGM), 448–468 (ALTG…GVFI), 506–526 (VTGK…VGLA), and 542–562 (FLLL…SWMI).

The protein belongs to the lactate permease family.

The protein resides in the cell membrane. In terms of biological role, is the principal permease for the uptake of L-lactate in B.subtilis. The protein is L-lactate permease (lutP) of Bacillus subtilis (strain 168).